The sequence spans 346 residues: FCTPMMDLADEFGIPSYIFFASGGGFLGFMLYVQKIHDEENFNPIEFKDSDTELIVPSLVNPFPTRILPSSILNKERFGQLLAIAKKFRQAKGIIVNTFLELESRAIESFKVPPLYHVGPILDVKSDGRNTHPEIMQWLDDQPEGSVVFLCFGSMGSFSEDQLKEIAYALENSGHRFLWSIRRPPPPDKIASPTDYEDPRDVLPEGFLERTVAVGKVIGWAPQVAVLAHPAIGGFVSHCGWNSVLESLWFGVPIATWPMYAEQQFNAFEMVVELGLGVEIDMGYRKESGIIVNSDKIERAIRKLMENSDEKRKKVKEMREKSKMALIDGGSSFISLGDFIKDAMEG.

Residues A221, Q223, H238, W241, N242, S243, and E246 each contribute to the UDP-alpha-D-glucose site. Position 261 (A261) interacts with an anthocyanidin. Positions 262 and 263 each coordinate UDP-alpha-D-glucose.

It belongs to the UDP-glycosyltransferase family. In terms of tissue distribution, expressed in cotyledons, roots and leaves.

The catalysed reaction is an anthocyanidin + UDP-alpha-D-glucose + H(+) = an anthocyanidin 3-O-beta-D-glucoside + UDP. It participates in pigment biosynthesis; anthocyanin biosynthesis. In terms of biological role, in the presence of other necessary color factors, this glycosylation reaction allows the accumulation of anthocyanin pigments. This is Anthocyanidin 3-O-glucosyltransferase 2 (GT2) from Manihot esculenta (Cassava).